Consider the following 219-residue polypeptide: Rho-related protein racN (219 aa).

12 to 19 (GDVTIGKT) provides a ligand contact to GTP. The Effector region motif lies at 33–41 (YIPTIFDNH). GTP-binding positions include 58–62 (DTGGG) and 114–117 (TKTD). Residue Cys-216 is modified to Cysteine methyl ester. The S-geranylgeranyl cysteine moiety is linked to residue Cys-216. Residues 217–219 (IIC) constitute a propeptide, removed in mature form.

It belongs to the small GTPase superfamily. Rho family.

The protein localises to the cell membrane. This Dictyostelium discoideum (Social amoeba) protein is Rho-related protein racN (racN).